The sequence spans 239 residues: SKA complex subunit 1 (239 aa).

Residues 87-115 are disordered; the sequence is PDSVPQKSTRPCLDDEKEGSSVVQPPESG. Residues 116 to 239 form a microtubule binding region; sequence NRHVQLISEQ…RCGPLTFYYA (124 aa).

It belongs to the SKA1 family. As to quaternary structure, component of the SKA complex, composed of two copies of ska-1 and a single copy of ska-3. The core complex associates with microtubules and may form dimeric assemblies. Interacts with ska-3 and microtubules.

It is found in the cytoplasm. Its subcellular location is the cytoskeleton. It localises to the spindle. The protein resides in the chromosome. The protein localises to the centromere. It is found in the kinetochore. Functionally, component of the SKA complex, a microtubule plus end-binding complex of the outer kinetochore that stabilizes spindle microtubule-kinetochore attachments, promotes alignment of chromosomes at the mitotic spindle equator (chromosome congression) and assists suppression of the spindle assembly checkpoint. Kinetochores, consisting of a centromere-associated inner segment and a microtubule-contacting outer segment, play a crucial role in chromosome segregation by mediating the physical connection between centromeric DNA and spindle microtubules. The outer kinetochore is made up of the ten-subunit KMN network complex, comprising the MIS12, NDC80 and KNL1 complexes, and auxiliary microtubule-associated components such as the SKA complex; together they connect the outer kinetochore with the inner kinetochore, bind microtubules, and mediate interactions with mitotic checkpoint proteins that delay anaphase until chromosomes are bioriented on the spindle. The SKA complex is loaded onto bioriented kinetochores and it facilitates chromosome congression by stabilizing microtubules and end-on attachment of the NDC80 complex to depolymerizing spindle microtubules, thereby assisting the poleward-moving kinetochore in withstanding microtubule pulling forces. The complex associates with dynamic microtubule plus-ends and can track both depolymerizing and elongating microtubules. The complex recruits protein phosphatase 1 (PP1) to the kinetochore in prometaphase and metaphase, to oppose spindle assembly checkpoint signaling and promote the onset of anaphase. In the complex, it mediates interactions with microtubules. During meiosis the SKA complex stabilizes the meiotic spindle and is required for its migration to the cortex. This is SKA complex subunit 1 from Caenorhabditis briggsae.